Reading from the N-terminus, the 982-residue chain is Envelope glycoprotein gp160 (982 aa).

The first 106 residues, 1 to 106 (MASKESKPSR…CLMWEVRKGN (106 aa)), serve as a signal peptide directing secretion. At 107–831 (QCQAEEVIAL…WSSWFSWLKY (725 aa)) the chain is on the extracellular side. N140, N161, N206, N258, N298, N364, N381, N387, N403, N414, N435, N439, N470, N475, N481, N491, N501, N515, N527, N537, N542, N543, and N568 each carry an N-linked (GlcNAc...) asparagine; by host glycan. The interval 657–677 (GIGLVIVLAIMAIIAAAGAGL) is fusion peptide. A coiled-coil region spans residues 689-738 (RTAVQSLANATAAQQEVLEASYAMVQHIAKGIRILEARVARVEALVDMMV). N697 carries an N-linked (GlcNAc...) asparagine; by host glycan. The immunosuppression stretch occupies residues 723–738 (LEARVARVEALVDMMV). Residues N764, N771, N787, and N821 are each glycosylated (N-linked (GlcNAc...) asparagine; by host). Positions 779 to 814 (EEIEQHEGNLSLLLREAALQVHIAQRDARRIPDAWK) form a coiled coil. The helical transmembrane segment at 832–852 (IPWIIMGIVGLMCFRILMCVI) threads the bilayer. Residues 853-982 (SMCLQAYKQV…PTLENDYVEL (130 aa)) are Cytoplasmic-facing. C855 is lipidated: S-palmitoyl cysteine; by host.

In terms of assembly, the mature envelope protein (Env) consists of a trimer of SU-TM heterodimers attached by noncovalent interactions or by a labile interchain disulfide bond. In terms of processing, specific enzymatic cleavages in vivo yield mature proteins. Envelope glycoproteins are synthesized as an inactive precursor that is N-glycosylated and processed likely by host cell furin or by a furin-like protease in the Golgi to yield the mature SU and TM proteins. The cleavage site between SU and TM requires the minimal sequence [KR]-X-[KR]-R. Post-translationally, the transmembrane protein is palmitoylated.

It is found in the virion membrane. The protein localises to the host cell membrane. In terms of biological role, the surface protein (SU) attaches the virus to the host cell by binding to its receptor. This interaction triggers the refolding of the transmembrane protein (TM) and is thought to activate its fusogenic potential by unmasking its fusion peptide. Fusion occurs at the host cell plasma membrane. Functionally, the transmembrane protein (TM) acts as a class I viral fusion protein. Under the current model, the protein has at least 3 conformational states: pre-fusion native state, pre-hairpin intermediate state, and post-fusion hairpin state. During viral and target cell membrane fusion, the coiled coil regions (heptad repeats) assume a trimer-of-hairpins structure, positioning the fusion peptide in close proximity to the C-terminal region of the ectodomain. The formation of this structure appears to drive apposition and subsequent fusion of viral and target cell membranes. Membranes fusion leads to delivery of the nucleocapsid into the cytoplasm. This chain is Envelope glycoprotein gp160 (env), found in Maedi visna virus (strain 1514) (MVV).